The primary structure comprises 348 residues: Phosphate acyltransferase (348 aa).

This sequence belongs to the PlsX family. In terms of assembly, homodimer. Probably interacts with PlsY.

It is found in the cytoplasm. It carries out the reaction a fatty acyl-[ACP] + phosphate = an acyl phosphate + holo-[ACP]. It participates in lipid metabolism; phospholipid metabolism. Its function is as follows. Catalyzes the reversible formation of acyl-phosphate (acyl-PO(4)) from acyl-[acyl-carrier-protein] (acyl-ACP). This enzyme utilizes acyl-ACP as fatty acyl donor, but not acyl-CoA. The sequence is that of Phosphate acyltransferase from Rhizobium leguminosarum bv. trifolii (strain WSM2304).